The following is a 937-amino-acid chain: CAP-Gly domain-containing linker protein 1 homolog (937 aa).

One can recognise a CAP-Gly domain in the interval glycine 39–proline 81. 2 disordered regions span residues glutamate 90–threonine 131 and leucine 264–glutamine 548. A compositionally biased stretch (polar residues) spans leucine 268–phenylalanine 281. Over residues glutamate 285–glycine 295 the composition is skewed to basic and acidic residues. Polar residues predominate over residues asparagine 296–proline 309. Basic and acidic residues-rich tracts occupy residues histidine 317–proline 353, isoleucine 383–serine 396, proline 409–arginine 424, and alanine 463–isoleucine 473. Low complexity predominate over residues serine 492–serine 501. Coiled coils occupy residues glutamate 566 to isoleucine 740 and glutamine 773 to glutamine 800. Disordered regions lie at residues methionine 819 to asparagine 866 and proline 916 to methionine 937. Residues arginine 832 to serine 844 are compositionally biased toward low complexity. Residues methionine 845 to serine 858 show a composition bias toward polar residues.

This is CAP-Gly domain-containing linker protein 1 homolog from Caenorhabditis elegans.